The sequence spans 508 residues: Early growth response protein 1 (508 aa).

Disordered stretches follow at residues 18–78 (PQFL…ESFS) and 136–210 (MTNP…QYPP). A compositionally biased stretch (low complexity) spans 33–42 (NNSSSSSSSS). Residues 43–52 (SGGGGGGGSN) show a composition bias toward gly residues. Over residues 139–164 (PPTSSSSAPSPAASSSSSASQSPPLS) the composition is skewed to low complexity. Lys-278 is covalently cross-linked (Glycyl lysine isopeptide (Lys-Gly) (interchain with G-Cter in SUMO2)). The tract at residues 292–311 (SRMRKYPNRPSKTPPHERPY) is disordered. 3 consecutive C2H2-type zinc fingers follow at residues 311–335 (YACP…IRIH), 341–363 (FQCR…IRTH), and 369–391 (FACD…TKIH). Positions 382-453 (DERKRHTKIH…SSTYPSPAHS (72 aa)) are disordered. Over residues 386–396 (RHTKIHLRQKD) the composition is skewed to basic residues. Low complexity predominate over residues 402-450 (SVVASSAASSLSSYPSPVATSYPSPATTSFPSPVPTSYSSPGSSTYPSP). 7 repeat units span residues 413-420 (SSYPSPVA), 421-428 (TSYPSPAT), 429-436 (TSFPSPVP), 437-444 (TSYSSPGS), 445-452 (STYPSPAH), 453-460 (SGFPSPSV), and 462-468 (TTYASVP). The segment at 413-468 (SSYPSPVATSYPSPATTSFPSPVPTSYSSPGSSTYPSPAHSGFPSPSVATTYASVP) is 7 X 8 AA tandem repeats of [TS](2)-[FY]-[PS]-S-P-[GSAV]-X.

It belongs to the EGR C2H2-type zinc-finger protein family. Interacts with SNAI1 and SP1 upon 12-O-tetradecanoylphorbol-13-acetate (TPA) induction. In terms of tissue distribution, detected in kidney thick ascending limbs and collecting ducts (at protein level).

It is found in the nucleus. The protein resides in the cytoplasm. Transcriptional regulator. Recognizes and binds to the DNA sequence 5'-GCG(T/G)GGGCG-3'(EGR-site) in the promoter region of target genes. Binds double-stranded target DNA, irrespective of the cytosine methylation status. Regulates the transcription of numerous target genes, and thereby plays an important role in regulating the response to growth factors, DNA damage, and ischemia. Plays a role in the regulation of cell survival, proliferation and cell death. Activates expression of p53/TP53 and TGFB1, and thereby helps prevent tumor formation. Required for normal progress through mitosis and normal proliferation of hepatocytes after partial hepatectomy. Mediates responses to ischemia and hypoxia; regulates the expression of proteins such as IL1B and CXCL2 that are involved in inflammatory processes and development of tissue damage after ischemia. Regulates biosynthesis of luteinizing hormone (LHB) in the pituitary. Regulates the amplitude of the expression rhythms of clock genes: BMAL1, PER2 and NR1D1 in the liver via the activation of PER1 (clock repressor) transcription. Regulates the rhythmic expression of core-clock gene BMAL1 in the suprachiasmatic nucleus (SCN). Regulates biosynthesis of glucocorticoid receptor GR/NR3C1 in the hippocampus and thereby may play a role in the behavioral and hypothalamic-pituitary-adrenal responses to stress in offspring. This chain is Early growth response protein 1 (Egr1), found in Rattus norvegicus (Rat).